Consider the following 233-residue polypeptide: Biosynthetic peptidoglycan transglycosylase (233 aa).

Residues 8–28 form a helical membrane-spanning segment; it reads LIALPVGIFIFFNAYVYGNII.

It belongs to the glycosyltransferase 51 family.

Its subcellular location is the cell inner membrane. The catalysed reaction is [GlcNAc-(1-&gt;4)-Mur2Ac(oyl-L-Ala-gamma-D-Glu-L-Lys-D-Ala-D-Ala)](n)-di-trans,octa-cis-undecaprenyl diphosphate + beta-D-GlcNAc-(1-&gt;4)-Mur2Ac(oyl-L-Ala-gamma-D-Glu-L-Lys-D-Ala-D-Ala)-di-trans,octa-cis-undecaprenyl diphosphate = [GlcNAc-(1-&gt;4)-Mur2Ac(oyl-L-Ala-gamma-D-Glu-L-Lys-D-Ala-D-Ala)](n+1)-di-trans,octa-cis-undecaprenyl diphosphate + di-trans,octa-cis-undecaprenyl diphosphate + H(+). It functions in the pathway cell wall biogenesis; peptidoglycan biosynthesis. Peptidoglycan polymerase that catalyzes glycan chain elongation from lipid-linked precursors. The protein is Biosynthetic peptidoglycan transglycosylase of Neisseria meningitidis serogroup C / serotype 2a (strain ATCC 700532 / DSM 15464 / FAM18).